The following is a 204-amino-acid chain: Probable nicotinate-nucleotide adenylyltransferase (204 aa).

This sequence belongs to the NadD family.

It carries out the reaction nicotinate beta-D-ribonucleotide + ATP + H(+) = deamido-NAD(+) + diphosphate. The protein operates within cofactor biosynthesis; NAD(+) biosynthesis; deamido-NAD(+) from nicotinate D-ribonucleotide: step 1/1. Catalyzes the reversible adenylation of nicotinate mononucleotide (NaMN) to nicotinic acid adenine dinucleotide (NaAD). This is Probable nicotinate-nucleotide adenylyltransferase from Mycobacterium sp. (strain JLS).